A 356-amino-acid polypeptide reads, in one-letter code: Galectin-9C (356 aa).

One can recognise a Galectin 1 domain in the interval 17–148 (FSGTIQGGLQ…SVQLSYISFQ (132 aa)). 82-88 (WGPEERK) lines the a beta-D-galactoside pocket. Residues 170-190 (FPPRPRGRRQKPPSVRPANPA) are disordered. In terms of domain architecture, Galectin 2 spans 228–356 (FITTIPGGLY…GDIQLTHVQT (129 aa)). 288 to 294 (WGSEERS) lines the a beta-D-galactoside pocket.

Binds galactosides. The protein is Galectin-9C (LGALS9C) of Homo sapiens (Human).